Reading from the N-terminus, the 144-residue chain is Glycine-rich protein DC9.1 (144 aa).

Residues 5–25 (IFLLLGLSIAFAILISSEVAA) form a helical membrane-spanning segment. 11 repeat units span residues 37–42 (GYNNGG), 43–48 (GYHNGG), 50–55 (GYNNGG), 56–61 (GYHNGG), 63–68 (GYNNGG), 69–74 (GYHNGG), 76–81 (GYNNGG), 82–87 (GYHNGG), 89–94 (GYNNGG), 102–107 (GYNNGG), and 108–113 (GHHGGG). The tract at residues 37 to 113 (GYNNGGGYHN…NNGGGHHGGG (77 aa)) is 11 X 6 AA tandem repeats of G-Y-[NH]-N-G -G.

This sequence belongs to the GRP family.

The protein localises to the membrane. This chain is Glycine-rich protein DC9.1, found in Daucus carota (Wild carrot).